The following is a 421-amino-acid chain: Adenylosuccinate synthetase (421 aa).

Residues 11-17 (GDEGKGK) and 39-41 (GHT) contribute to the GTP site. The active-site Proton acceptor is the aspartate 12. Residues aspartate 12 and glycine 39 each contribute to the Mg(2+) site. IMP is bound by residues 12–15 (DEGK), 37–40 (NAGH), threonine 129, arginine 143, asparagine 219, threonine 234, and arginine 298. The Proton donor role is filled by histidine 40. 294–300 (VTTGRRR) contributes to the substrate binding site. Residues arginine 300, 326-328 (KLD), and 409-411 (GTG) contribute to the GTP site.

It belongs to the adenylosuccinate synthetase family. In terms of assembly, homodimer. It depends on Mg(2+) as a cofactor.

The protein localises to the cytoplasm. It catalyses the reaction IMP + L-aspartate + GTP = N(6)-(1,2-dicarboxyethyl)-AMP + GDP + phosphate + 2 H(+). It participates in purine metabolism; AMP biosynthesis via de novo pathway; AMP from IMP: step 1/2. In terms of biological role, plays an important role in the de novo pathway and in the salvage pathway of purine nucleotide biosynthesis. Catalyzes the first committed step in the biosynthesis of AMP from IMP. The polypeptide is Adenylosuccinate synthetase (Paracoccidioides lutzii (strain ATCC MYA-826 / Pb01) (Paracoccidioides brasiliensis)).